Here is a 259-residue protein sequence, read N- to C-terminus: Ribosomal RNA small subunit methyltransferase A (259 aa).

The S-adenosyl-L-methionine site is built by asparagine 12, leucine 14, glycine 39, glutamate 60, aspartate 84, and asparagine 102.

This sequence belongs to the class I-like SAM-binding methyltransferase superfamily. rRNA adenine N(6)-methyltransferase family. RsmA subfamily.

It is found in the cytoplasm. The enzyme catalyses adenosine(1518)/adenosine(1519) in 16S rRNA + 4 S-adenosyl-L-methionine = N(6)-dimethyladenosine(1518)/N(6)-dimethyladenosine(1519) in 16S rRNA + 4 S-adenosyl-L-homocysteine + 4 H(+). In terms of biological role, specifically dimethylates two adjacent adenosines (A1518 and A1519) in the loop of a conserved hairpin near the 3'-end of 16S rRNA in the 30S particle. May play a critical role in biogenesis of 30S subunits. The sequence is that of Ribosomal RNA small subunit methyltransferase A from Nitrosospira multiformis (strain ATCC 25196 / NCIMB 11849 / C 71).